The following is a 226-amino-acid chain: Protein GrpE (226 aa).

Disordered regions lie at residues 1–24 (MADE…PRDR) and 205–226 (GVSK…EDNA). Residues 217–226 (NGASTSEDNA) are compositionally biased toward polar residues.

It belongs to the GrpE family. In terms of assembly, homodimer.

It is found in the cytoplasm. Functionally, participates actively in the response to hyperosmotic and heat shock by preventing the aggregation of stress-denatured proteins, in association with DnaK and GrpE. It is the nucleotide exchange factor for DnaK and may function as a thermosensor. Unfolded proteins bind initially to DnaJ; upon interaction with the DnaJ-bound protein, DnaK hydrolyzes its bound ATP, resulting in the formation of a stable complex. GrpE releases ADP from DnaK; ATP binding to DnaK triggers the release of the substrate protein, thus completing the reaction cycle. Several rounds of ATP-dependent interactions between DnaJ, DnaK and GrpE are required for fully efficient folding. The sequence is that of Protein GrpE from Brucella melitensis biotype 1 (strain ATCC 23456 / CCUG 17765 / NCTC 10094 / 16M).